The primary structure comprises 325 residues: Olfactory receptor 14L1 (325 aa).

The Extracellular portion of the chain corresponds to Met1–Ile43. Residues Val44–Ile64 form a helical membrane-spanning segment. Residues Ile65 to His72 are Cytoplasmic-facing. A helical transmembrane segment spans residues Leu73 to Ser93. The Extracellular portion of the chain corresponds to Val94–Leu117. The helical transmembrane segment at Gln118–Tyr138 threads the bilayer. Over Asp139 to Glu151 the chain is Cytoplasmic. Residues Val152–Ile172 traverse the membrane as a helical segment. Over Cys173 to Glu214 the chain is Extracellular. Residues Ile215–Ser235 form a helical membrane-spanning segment. Residues Tyr236 to Thr255 lie on the Cytoplasmic side of the membrane. A helical transmembrane segment spans residues Phe256–Ala276. The Extracellular portion of the chain corresponds to Tyr277–Asp289. The helical transmembrane segment at Val290–Leu310 threads the bilayer. Residues Arg311–Pro325 lie on the Cytoplasmic side of the membrane.

The protein belongs to the G-protein coupled receptor 1 family.

It is found in the cell membrane. Odorant receptor. In Homo sapiens (Human), this protein is Olfactory receptor 14L1.